The following is a 421-amino-acid chain: CinA-like protein (421 aa).

It belongs to the CinA family.

The protein is CinA-like protein of Mycobacterium sp. (strain JLS).